A 214-amino-acid polypeptide reads, in one-letter code: MVFNLFRISADLVHLLSIYFLLTKIISHKNCIGISLRSQILFFIVWVTRYLDIFYNFYSLYNTILKIVYLTTSAYTIYLISKRFRATYDKIHDTLNVWYLIVPCIVLAFIFTEDYSITEICWTFSIFLEAVAILPQILLLRSTGEVENLNSQYIFCLGLYRALYIINWIYRYATEQSYWSPLTWICGSIQTLLYVEYFYYYIKSRVEGTKFVLP.

Residues 1–4 (MVFN) lie on the Lumenal side of the membrane. The helical transmembrane segment at 5–23 (LFRISADLVHLLSIYFLLT) threads the bilayer. Over 24 to 37 (KIISHKNCIGISLR) the chain is Cytoplasmic. The helical transmembrane segment at 38–55 (SQILFFIVWVTRYLDIFY) threads the bilayer. Topologically, residues 56–63 (NFYSLYNT) are lumenal. The helical transmembrane segment at 64–82 (ILKIVYLTTSAYTIYLISK) threads the bilayer. Residues 83-98 (RFRATYDKIHDTLNVW) are Cytoplasmic-facing. A helical membrane pass occupies residues 99-112 (YLIVPCIVLAFIFT). Over 113 to 119 (EDYSITE) the chain is Lumenal. A helical transmembrane segment spans residues 120 to 139 (ICWTFSIFLEAVAILPQILL). The Cytoplasmic portion of the chain corresponds to 140–151 (LRSTGEVENLNS). A helical membrane pass occupies residues 152–170 (QYIFCLGLYRALYIINWIY). The Lumenal segment spans residues 171–181 (RYATEQSYWSP). The chain crosses the membrane as a helical span at residues 182–202 (LTWICGSIQTLLYVEYFYYYI). At 203–214 (KSRVEGTKFVLP) the chain is on the cytoplasmic side.

Belongs to the ERD2 family.

The protein resides in the endoplasmic reticulum membrane. Required for the retention of luminal endoplasmic reticulum proteins. Determines the specificity of the luminal ER protein retention system. Also required for normal vesicular traffic through the Golgi. The chain is ER lumen protein-retaining receptor from Entamoeba histolytica (strain ATCC 30459 / HM-1:IMSS / ABRM).